The sequence spans 339 residues: Cathepsin B (339 aa).

Positions 1–17 are cleaved as a signal peptide; that stretch reads MWWSLILLSCLLALTSA. Residues 18–79 constitute a propeptide, activation peptide; that stretch reads HDKPSFHPLS…GRVAFGEDID (62 aa). 6 cysteine pairs are disulfide-bonded: C93/C122, C105/C150, C141/C207, C142/C146, C179/C211, and C187/C198. Residue C108 is part of the active site. N-linked (GlcNAc...) asparagine glycosylation is present at N192. K220 bears the N6-acetyllysine mark. Residues H278 and N298 contribute to the active site. Residues 334 to 339 constitute a propeptide that is removed on maturation; the sequence is QYWGRF.

It belongs to the peptidase C1 family. Dimer of a heavy chain and a light chain cross-linked by a disulfide bond. Interacts with SRPX2. Directly interacts with SHKBP1. Expressed in thyroid epithelial cells.

It localises to the lysosome. It is found in the melanosome. Its subcellular location is the secreted. The protein localises to the extracellular space. The protein resides in the apical cell membrane. It catalyses the reaction Hydrolysis of proteins with broad specificity for peptide bonds. Preferentially cleaves -Arg-Arg-|-Xaa bonds in small molecule substrates (thus differing from cathepsin L). In addition to being an endopeptidase, shows peptidyl-dipeptidase activity, liberating C-terminal dipeptides.. Functionally, thiol protease which is believed to participate in intracellular degradation and turnover of proteins. Cleaves matrix extracellular phosphoglycoprotein MEPE. Involved in the solubilization of cross-linked TG/thyroglobulin in the thyroid follicle lumen. Has also been implicated in tumor invasion and metastasis. The sequence is that of Cathepsin B (Ctsb) from Mus musculus (Mouse).